The chain runs to 441 residues: Inner kinetochore subunit mis17 (441 aa).

The segment covering 160 to 173 (SSILENSPPNKVQR) has biased composition (polar residues). A disordered region spans residues 160 to 240 (SSILENSPPN…TSSMAPRNLL (81 aa)). The span at 174-183 (LSSLDSSQDS) shows a compositional bias: low complexity. Residues 192–201 (VTGTTFSSQA) show a composition bias toward polar residues. Residues 217–233 (SLTNQSSSLQSSLQTSS) are compositionally biased toward low complexity.

This sequence belongs to the CENP-U/AME1 family. Component of the heterotetrameric kinetochore subcomplex COMA, which consists of fta2, fta7, mal2 and mis17. The COMA subcomplex is part of a larger constitutive centromere-associated network (CCAN) (also known as central kinetochore Sim4 complex in fission yeast), which is composed of at least cnl2, cnp3, cnp20, fta1, fta2, fta3, fta4, fta6, fta7, mal2, mhf1, mhf2, mis6, mis15, mis17, sim4 and wip1. Interacts with mis6 and mis15.

The protein localises to the nucleus. Its subcellular location is the chromosome. It localises to the centromere. It is found in the kinetochore. Component of the kinetochore, a multiprotein complex that assembles on centromeric DNA and attaches chromosomes to spindle microtubules, mediating chromosome segregation and sister chromatid segregation during meiosis and mitosis. Component of the inner kinetochore COMA complex, which connects centromere-associated proteins and the outer kinetochore. COMA interacts with other inner kinetochore proteins to form the inner kinetochore constitutive centromere-associated network (CCAN), which serves as a structural platform for outer kinetochore assembly. This Schizosaccharomyces pombe (strain 972 / ATCC 24843) (Fission yeast) protein is Inner kinetochore subunit mis17 (mis17).